The primary structure comprises 202 residues: GTP cyclohydrolase 1 (202 aa).

Zn(2+)-binding residues include cysteine 90, histidine 93, and cysteine 163.

It belongs to the GTP cyclohydrolase I family. Homomer.

It carries out the reaction GTP + H2O = 7,8-dihydroneopterin 3'-triphosphate + formate + H(+). It functions in the pathway cofactor biosynthesis; 7,8-dihydroneopterin triphosphate biosynthesis; 7,8-dihydroneopterin triphosphate from GTP: step 1/1. This Mycobacterium ulcerans (strain Agy99) protein is GTP cyclohydrolase 1.